A 616-amino-acid polypeptide reads, in one-letter code: ATP-dependent RNA helicase VAD1 (616 aa).

A disordered region spans residues 1–35 (MASSSTLANDDWKQGLAAPPKDLRPQTEDVTATQG). Residues 36–64 (SRFEDFGLRRELLMGIYTAGFERPSPIQE) carry the Q motif motif. In terms of domain architecture, Helicase ATP-binding spans 67-238 (IPMALTGRDI…DQHMVQPYEI (172 aa)). 80-87 (AKNGTGKT) lines the ATP pocket. The short motif at 186–189 (DEAD) is the DEAD box element. The region spanning 248–408 (GVTQYYAYVE…PIPAVIDPVL (161 aa)) is the Helicase C-terminal domain. The interval 416–616 (EEERESPPPK…GASQSQQAQA (201 aa)) is disordered. 3 stretches are compositionally biased toward low complexity: residues 427-441 (AAIA…PQQR), 458-500 (PAAA…NSSP), and 508-523 (YPQQ…AQMQ). Residues 529-545 (PATQPQASAQIPVQGQT) are compositionally biased toward polar residues. 2 stretches are compositionally biased toward low complexity: residues 550 to 579 (PRAQ…PNTG) and 606 to 616 (AGASQSQQAQA).

Belongs to the DEAD box helicase family. DDX6/DHH1 subfamily.

It is found in the cytoplasm. The protein resides in the P-body. It carries out the reaction ATP + H2O = ADP + phosphate + H(+). In terms of biological role, ATP-dependent RNA helicase involved in mRNA turnover, and more specifically in mRNA decapping. Is involved in G1/S DNA-damage checkpoint recovery, probably through the regulation of the translational status of a subset of mRNAs. May also have a role in translation and mRNA nuclear export. Blocks autophagy in nutrient-rich conditions by, at least partly, binding and repressing the expression of a set of ATG genes, including ATG3, ATG7, ATG8, ATG19, ATG20 and ATG22. VAD1-mediated repression of autophagy is regulated by TOR-dependent phosphorylation of the decapping enzyme DCP2. Regulates multiple virulence-associated genes. Repression of autophagy by VAD1 also regulates the pathogenesis. The protein is ATP-dependent RNA helicase VAD1 of Cryptococcus neoformans var. grubii serotype A (strain H99 / ATCC 208821 / CBS 10515 / FGSC 9487) (Filobasidiella neoformans var. grubii).